The sequence spans 358 residues: DNA integrity scanning protein DisA (358 aa).

The DAC domain maps to 9 to 147 (KQDLSEILQF…ENMKYILKDI (139 aa)). ATP-binding positions include Gly76, Leu94, and 107–111 (MRHRT).

This sequence belongs to the DisA family. As to quaternary structure, homooctamer. It depends on Mg(2+) as a cofactor.

It catalyses the reaction 2 ATP = 3',3'-c-di-AMP + 2 diphosphate. Participates in a DNA-damage check-point that is active prior to asymmetric division when DNA is damaged. DisA forms globular foci that rapidly scan along the chromosomes during sporulation, searching for lesions. When a lesion is present, DisA pauses at the lesion site. This triggers a cellular response that culminates in a temporary block in sporulation initiation. Its function is as follows. Also has diadenylate cyclase activity, catalyzing the condensation of 2 ATP molecules into cyclic di-AMP (c-di-AMP). c-di-AMP acts as a signaling molecule that couples DNA integrity with progression of sporulation. The rise in c-di-AMP level generated by DisA while scanning the chromosome, operates as a positive signal that advances sporulation; upon encountering a lesion, the DisA focus arrests at the damaged site and halts c-di-AMP synthesis. This is DNA integrity scanning protein DisA from Bacillus licheniformis (strain ATCC 14580 / DSM 13 / JCM 2505 / CCUG 7422 / NBRC 12200 / NCIMB 9375 / NCTC 10341 / NRRL NRS-1264 / Gibson 46).